The primary structure comprises 361 residues: DNA replication and repair protein RecF (361 aa).

An ATP-binding site is contributed by 30–37 (GDNAQGKT).

This sequence belongs to the RecF family.

The protein resides in the cytoplasm. Functionally, the RecF protein is involved in DNA metabolism; it is required for DNA replication and normal SOS inducibility. RecF binds preferentially to single-stranded, linear DNA. It also seems to bind ATP. This chain is DNA replication and repair protein RecF, found in Clostridium novyi (strain NT).